Here is a 332-residue protein sequence, read N- to C-terminus: Very-long-chain 3-oxoacyl-CoA reductase (332 aa).

Residues 15 to 35 (GQWALAGIGALYVATRVGAFL) form a helical membrane-spanning segment. NADP(+) contacts are provided by V60, D115, D123, N142, K177, Y209, K213, V242, and T244. The Proton donor role is filled by Y209. K213 serves as the catalytic Lowers pKa of active site Tyr.

The protein belongs to the short-chain dehydrogenases/reductases (SDR) family.

It is found in the endoplasmic reticulum membrane. The catalysed reaction is a very-long-chain (3R)-3-hydroxyacyl-CoA + NADP(+) = a very-long-chain 3-oxoacyl-CoA + NADPH + H(+). It functions in the pathway lipid metabolism; fatty acid biosynthesis. Its function is as follows. Component of the microsomal membrane bound fatty acid elongation system, which produces the 26-carbon very long-chain fatty acids (VLCFA) from palmitate. Catalyzes the reduction of the 3-ketoacyl-CoA intermediate that is formed in each cycle of fatty acid elongation. VLCFAs serve as precursors for ceramide and sphingolipids. The polypeptide is Very-long-chain 3-oxoacyl-CoA reductase (Neurospora crassa (strain ATCC 24698 / 74-OR23-1A / CBS 708.71 / DSM 1257 / FGSC 987)).